Reading from the N-terminus, the 327-residue chain is GMP reductase (327 aa).

The Thioimidate intermediate role is filled by C175. Residue 204–227 participates in NADP(+) binding; sequence IIADGGIRTHGDIAKSIRFGASMV.

Belongs to the IMPDH/GMPR family. GuaC type 2 subfamily.

It carries out the reaction IMP + NH4(+) + NADP(+) = GMP + NADPH + 2 H(+). Catalyzes the irreversible NADPH-dependent deamination of GMP to IMP. It functions in the conversion of nucleobase, nucleoside and nucleotide derivatives of G to A nucleotides, and in maintaining the intracellular balance of A and G nucleotides. The polypeptide is GMP reductase (Oceanobacillus iheyensis (strain DSM 14371 / CIP 107618 / JCM 11309 / KCTC 3954 / HTE831)).